Here is a 343-residue protein sequence, read N- to C-terminus: SUMO-activating enzyme subunit aos-1 (343 aa).

It belongs to the ubiquitin-activating E1 family. In terms of assembly, heterodimer of aos-1 and uba-2.

The protein operates within protein modification; protein sumoylation. The dimeric enzyme acts as an E1 ligase for smo-1. It mediates ATP-dependent activation of smo-1 and formation of a thioester with a conserved cysteine residue on uba-2. This chain is SUMO-activating enzyme subunit aos-1 (aos-1), found in Caenorhabditis elegans.